The following is a 491-amino-acid chain: Pre-glycoprotein polyprotein GP complex (491 aa).

Gly2 carries the N-myristoyl glycine; by host lipid modification. Residues 2–17 are Extracellular-facing; the sequence is GQIVTFFQEVPHVIEE. A helical transmembrane segment spans residues 18–33; sequence VMNIVLIALSVLAVLK. At 34–58 the chain is on the cytoplasmic side; that stretch reads GLYNFATCGLVGLVTFLLLCGRSCT. Zn(2+) is bound at residue Cys57. The Extracellular segment spans residues 59–432; sequence TSLYKGVYEL…QGKTPLGLVD (374 aa). Asn79, Asn89, Asn99, Asn109, Asn119, and Asn167 each carry an N-linked (GlcNAc...) asparagine; by host glycan. Disulfide bonds link Cys86–Cys231, Cys118–Cys155, Cys180–Cys212, Cys279–Cys292, Cys301–Cys310, and Cys364–Cys385. An N-linked (GlcNAc...) asparagine; by host glycan is attached at Asn224. N-linked (GlcNAc...) asparagine; by host glycosylation is found at Asn365, Asn373, Asn390, and Asn395. The helical transmembrane segment at 433–453 threads the bilayer; that stretch reads LFVFSTSFYLISIFLHLVKIP. Over 454–491 the chain is Cytoplasmic; that stretch reads THRHIVGKSCPKPHRLNHMGICSCGLYKQPGVPVKWKR. Positions 455, 457, 463, 467, 475, and 477 each coordinate Zn(2+).

This sequence belongs to the arenaviridae GPC protein family. As to quaternary structure, interacts with glycoprotein G2. Part of the GP complex (GP-C) together with glycoprotein G1 and glycoprotein G2. The GP-complex interacts with protein Z, which interacts with ribonucleocapsid; these interactions may induce virion budding. In terms of assembly, homotrimer; disulfide-linked. In pre-fusion state, G1 homotrimers bind G2 homotrimers via ionic interactions. Part of the GP complex (GP-C) together with glycoprotein G2 and the stable signal peptide. Interacts with the primary host receptor DAG1 on the cell surface; this interaction occurs at pH 8.0 but not at pH 6.0 and below. Upon virus internalization and at endosomal pH, interacts with the host lysosomal protein LAMP1; this interaction mediates G1 dissociation from GP-C and membrane fusion. The GP-complex interacts with protein Z, which interacts with ribonucleocapsid; these interactions may induce virion budding. Homotrimer. Interacts with the stable signal peptide. In pre-fusion state, G2 homotrimers bind G1 homotrimers via ionic interactions. Part of the GP complex (GP-C) together with glycoprotein G1 and the stable signal peptide. Acidification in the endosome triggers rearrangements, which ultimately leads to a 6 helix bundle formed by the two heptad repeat domains (HR1 and HR2) in post-fusion state. The GP-complex interacts with protein Z, which interacts with ribonucleocapsid; these interactions may induce virion budding. In terms of processing, specific enzymatic cleavages in vivo yield mature proteins. GP-C polyprotein is cleaved in the endoplasmic reticulum by the host protease MBTPS1. Only cleaved glycoprotein is incorporated into virions. Post-translationally, the SSP remains stably associated with the GP complex following cleavage by signal peptidase and plays crucial roles in the trafficking of GP through the secretory pathway. Myristoylation is necessary for GP2-mediated fusion activity.

The protein localises to the virion membrane. The protein resides in the host endoplasmic reticulum membrane. It is found in the host Golgi apparatus membrane. It localises to the host cell membrane. Functionally, functions as a cleaved signal peptide that is retained as the third component of the GP complex (GP-C). Helps to stabilize the spike complex in its native conformation. The SSP is required for efficient glycoprotein expression, post-translational maturation cleavage of G1 and G2, glycoprotein transport to the cell surface plasma membrane, formation of infectious virus particles, and acid pH-dependent glycoprotein-mediated cell fusion. In terms of biological role, forms the virion spikes together with glycoprotein G2. The glycoprotein spike trimers are connected to the underlying matrix. Interacts with the host receptor. Mediates virus attachment to the host primary receptor alpha-dystroglycan DAG1 (alpha-DG) at the cell surface. This attachment induces virion internalization apparently through macropinocytosis. Following endocytosis, there is a pH-dependent switch from binding DAG1 to the host lysosomal receptor LAMP1. This latter binding triggers the dissociation of GP1, exposing the fusion subunit, GP2, such that fusion can occur. Down-modulates host DAG1. Forms the virion spikes together with glycoprotein G1. The glycoprotein spike trimers are connected to the underlying matrix. Class I viral fusion protein that directs fusion of viral and host endosomal membranes, leading to delivery of the nucleocapsid into the cytoplasm. Membrane fusion is mediated by irreversible conformational changes induced by acidification. The chain is Pre-glycoprotein polyprotein GP complex from Homo sapiens (Human).